A 223-amino-acid chain; its full sequence is ATP phosphoribosyltransferase (223 aa).

It belongs to the ATP phosphoribosyltransferase family. Short subfamily. As to quaternary structure, heteromultimer composed of HisG and HisZ subunits.

It is found in the cytoplasm. It catalyses the reaction 1-(5-phospho-beta-D-ribosyl)-ATP + diphosphate = 5-phospho-alpha-D-ribose 1-diphosphate + ATP. The protein operates within amino-acid biosynthesis; L-histidine biosynthesis; L-histidine from 5-phospho-alpha-D-ribose 1-diphosphate: step 1/9. In terms of biological role, catalyzes the condensation of ATP and 5-phosphoribose 1-diphosphate to form N'-(5'-phosphoribosyl)-ATP (PR-ATP). Has a crucial role in the pathway because the rate of histidine biosynthesis seems to be controlled primarily by regulation of HisG enzymatic activity. The protein is ATP phosphoribosyltransferase of Novosphingobium aromaticivorans (strain ATCC 700278 / DSM 12444 / CCUG 56034 / CIP 105152 / NBRC 16084 / F199).